The chain runs to 325 residues: Protein SAR DEFICIENT 4 (325 aa).

The N-terminal 42 residues, 1–42 (MAALPVFIPAESFPSILSHETLINHFRTNLPKHSSTITSPVR), are a transit peptide targeting the chloroplast.

Belongs to the ornithine cyclodeaminase/mu-crystallin family.

It is found in the plastid. The protein resides in the chloroplast. Functionally, involved in the biosynthesis of pipecolate (Pip), a metabolite that orchestrates defense amplification, positive regulation of salicylic acid (SA) biosynthesis, and priming to guarantee effective local resistance induction and the establishment of systemic acquired resistance (SAR). Converts delta-(1)-piperideine-2-carboxylate (P2C) to Pip. Mediates reduction of P2C and biosynthesis of Pip in systemic tissue and contributes to SAR establishment. Does not possess ornithine cyclodeaminase activity in vitro. The protein is Protein SAR DEFICIENT 4 of Arabidopsis thaliana (Mouse-ear cress).